The sequence spans 1135 residues: uncharacterized protein (1135 aa).

An N-terminal signal peptide occupies residues M1–A28. 7 consecutive transmembrane segments (helical) span residues I332 to G352, E359 to I379, M393 to M413, M495 to V515, M522 to A542, M555 to V575, and I700 to F720.

This sequence belongs to the TrbL/VirB6 family.

The protein localises to the cell membrane. This is an uncharacterized protein from Rickettsia typhi (strain ATCC VR-144 / Wilmington).